Consider the following 226-residue polypeptide: Peroxynitrite isomerase 2 (226 aa).

The GXWXGXG motif lies at 73 to 79 (GVWRGEG). Heme b is bound by residues lysine 189 and histidine 216.

Belongs to the nitrobindin family. As to quaternary structure, homodimer. The cofactor is heme b.

It carries out the reaction peroxynitrite = nitrate. It functions in the pathway nitrogen metabolism. Heme-binding protein able to scavenge peroxynitrite and to protect free L-tyrosine against peroxynitrite-mediated nitration, by acting as a peroxynitrite isomerase that converts peroxynitrite to nitrate. Therefore, this protein likely plays a role in peroxynitrite sensing and in the detoxification of reactive nitrogen and oxygen species (RNS and ROS, respectively). Is able to bind nitric oxide (NO) in vitro, but may act as a sensor of peroxynitrite levels in vivo. This Mycobacterium bovis (strain ATCC BAA-935 / AF2122/97) protein is Peroxynitrite isomerase 2.